Reading from the N-terminus, the 428-residue chain is Probable mannosyltransferase YUR1 (428 aa).

The Cytoplasmic segment spans residues 1-3 (MAK). Residues 4-24 (GGSLYIVGIFLPIWTFMIYIF) traverse the membrane as a helical; Signal-anchor for type II membrane protein segment. The tract at residues 25–88 (GKELFLIRKY…TRQNDSDSFH (64 aa)) is stem region. Residues 25-428 (GKELFLIRKY…YFLKEEQDEI (404 aa)) are Lumenal-facing. N-linked (GlcNAc...) asparagine glycans are attached at residues Asn-77, Asn-82, Asn-92, and Asn-167. Residues 89-428 (LRENATILML…YFLKEEQDEI (340 aa)) form a catalytic region. The Nucleophile role is filled by Glu-313. N-linked (GlcNAc...) asparagine glycosylation is present at Asn-414.

Belongs to the glycosyltransferase 15 family.

It localises to the golgi apparatus membrane. Its pathway is protein modification; protein glycosylation. Its function is as follows. Possible glycosyltransferase involved in N-linked glycosylation. Transfers an alpha-D-mannosyl residue from GDP-mannose into lipid-linked oligosaccharide, forming an alpha-(1-&gt;2)-D-mannosyl-D-mannose linkage. The protein is Probable mannosyltransferase YUR1 (YUR1) of Saccharomyces cerevisiae (strain ATCC 204508 / S288c) (Baker's yeast).